The following is a 299-amino-acid chain: Small ribosomal subunit protein uS2 (299 aa).

Residues 259 to 291 are compositionally biased toward low complexity; sequence AAASAAGPTSWEADGADWAASSAPAAAGESWAE. Residues 259 to 299 are disordered; the sequence is AAASAAGPTSWEADGADWAASSAPAAAGESWAETQPAEGKW.

Belongs to the universal ribosomal protein uS2 family. In terms of assembly, component of the small ribosomal subunit. Mature ribosomes consist of a small (40S) and a large (60S) subunit. The 40S subunit contains about 33 different proteins and 1 molecule of RNA (18S). The 60S subunit contains about 49 different proteins and 3 molecules of RNA (25S, 5.8S and 5S). Interacts with rps21.

It is found in the cytoplasm. Its function is as follows. Required for the assembly and/or stability of the 40S ribosomal subunit. Required for the processing of the 20S rRNA-precursor to mature 18S rRNA in a late step of the maturation of 40S ribosomal subunits. The chain is Small ribosomal subunit protein uS2 (rps0) from Aspergillus flavus (strain ATCC 200026 / FGSC A1120 / IAM 13836 / NRRL 3357 / JCM 12722 / SRRC 167).